Consider the following 23-residue polypeptide: uncharacterized protein (23 aa).

The helical transmembrane segment at 3–23 (YFFMGISFMVIVWAGTFALMI) threads the bilayer.

Its subcellular location is the cell inner membrane. This is an uncharacterized protein from Escherichia coli (strain K12).